Reading from the N-terminus, the 779-residue chain is MEDLKTTDALSLPVVSDNGGIIEPELQLPQAIPTELENNEEENGTIQQSQSEEDSAENGKIYMDDTFLPSKSQVKETQDSPTTPSFVSPSAEIVLPRVNTKYEAEGTTRNAVSPRPLYSPRSIGSPRALLSPRFAGSSSPLSNGTPISMDSFRDSIDTASPFESVKEAVSKFGGITDWKAHRMKVLERRNFVEQELDKIQEEIPEYKKKSEMVEMSKMLAVEELESTKRLIEELKLNLEKAETEEQQAKQDSELAKLRVQEMEQGIADEASVASKAQLEVAQARHTSAISELESVKEELQTLQNEYDALVKEKDLAVKEAEEAVIASKEVERKVEELTIELIATKESLECAHSSHLEAEEHRIGAAMLRDQETHRWEKELKQAEEELQRLKQHLVSTKELQVKLEFASALLLDLKKELADHKESSKVKEETSETVVTNIEISLQEKTTDIQKAVASAKKELEEVNANVEKATSEVNCLKVASSSLRLEIDKEKSALDSLKQREGMASVTVASLEAEIDITRCEIALVKSKEKETREEMVELPKQLQQASQEADEAKSFAELAREELRKSQEEAEQAKAGASTMESRLFAAQKEIEAIKASERLALAAIKALQESESSSKENAVDSPRTVTLTIEEYYELSKRAHEAEEAANARVAAAVSEVGEAKETEKRSLEKLEEVNKEMVERKATLAGAMEKAEKAKEGKLGVEQELRKWREVSEKKRKNGSSHGKSIQGSKEKEAETSVSNETETNPIPQVNPVKKKKKLFPRFFMFLMKKKSHK.

The interval 1-119 is disordered; the sequence is MEDLKTTDAL…NAVSPRPLYS (119 aa). Over residues 79 to 88 the composition is skewed to polar residues; it reads DSPTTPSFVS. S139 carries the post-translational modification Phosphoserine. Coiled-coil stretches lie at residues 182–503, 532–587, and 657–715; these read RMKV…KQRE, KETR…ESRL, and AVSE…KWRE. Residues 650 to 661 show a composition bias toward low complexity; the sequence is ANARVAAAVSEV. Disordered stretches follow at residues 650–674 and 694–759; these read ANAR…SLEK and EKAE…NPVK. Composition is skewed to basic and acidic residues over residues 662–674 and 694–718; these read GEAK…SLEK and EKAE…EVSE. The span at 741 to 753 shows a compositional bias: polar residues; the sequence is TSVSNETETNPIP.

Belongs to the WEB family.

The protein is Protein WEAK CHLOROPLAST MOVEMENT UNDER BLUE LIGHT-like 1 (WEL1) of Arabidopsis thaliana (Mouse-ear cress).